A 297-amino-acid chain; its full sequence is Acetaldehyde dehydrogenase (297 aa).

NAD(+) is bound at residue 18–21 (TGNI). Cysteine 133 (acyl-thioester intermediate) is an active-site residue. Residues 165–173 (SAGPATRLN) and asparagine 275 contribute to the NAD(+) site.

The protein belongs to the acetaldehyde dehydrogenase family.

It carries out the reaction acetaldehyde + NAD(+) + CoA = acetyl-CoA + NADH + H(+). The polypeptide is Acetaldehyde dehydrogenase (Spirochaeta aurantia).